The sequence spans 241 residues: Orotidine 5'-phosphate decarboxylase (241 aa).

Residues Asp15, Lys37, 64-73, Thr126, Arg187, Gln196, Gly216, and Arg217 contribute to the substrate site; that span reads DLKYHDIPNT. Lys66 acts as the Proton donor in catalysis.

Belongs to the OMP decarboxylase family. Type 1 subfamily. As to quaternary structure, homodimer.

The catalysed reaction is orotidine 5'-phosphate + H(+) = UMP + CO2. It functions in the pathway pyrimidine metabolism; UMP biosynthesis via de novo pathway; UMP from orotate: step 2/2. Its function is as follows. Catalyzes the decarboxylation of orotidine 5'-monophosphate (OMP) to uridine 5'-monophosphate (UMP). The chain is Orotidine 5'-phosphate decarboxylase from Trichlorobacter lovleyi (strain ATCC BAA-1151 / DSM 17278 / SZ) (Geobacter lovleyi).